The primary structure comprises 204 residues: MPGLIGKKIGMTSIFSVEGKNLPCTVMEVGPCVVTQVKTVDKDGYEAVQVGFEDKKEKHTTKPERGHFKRAGVSFKRYLAEFKEQGKYKEGDVITVDFFNKGIYVDVVGISKGKGFQGVVKRHGFRGVGEATLGQSDRQRHPGSIGACSYPAKVFKGTRMAGQMGNTKVTIQNLEVIELISKYNLLIVKGSVPGSKGSILIVKK.

It belongs to the universal ribosomal protein uL3 family. Part of the 50S ribosomal subunit. Forms a cluster with proteins L14 and L19.

Its function is as follows. One of the primary rRNA binding proteins, it binds directly near the 3'-end of the 23S rRNA, where it nucleates assembly of the 50S subunit. The chain is Large ribosomal subunit protein uL3 from Azobacteroides pseudotrichonymphae genomovar. CFP2.